A 315-amino-acid chain; its full sequence is uncharacterized protein (315 aa).

The protein belongs to the carbohydrate kinase PfkB family.

This is an uncharacterized protein from Escherichia coli (strain K12).